An 884-amino-acid polypeptide reads, in one-letter code: Receptor-like protein 39 (884 aa).

Positions 1-24 are cleaved as a signal peptide; it reads MSELLFRLNFLLLLLLSCVSLASS. At 25 to 847 the chain is on the extracellular side; it reads FFSFNDPVVG…EEEEQVLNWK (823 aa). N-linked (GlcNAc...) asparagine glycans are attached at residues Asn-59, Asn-71, and Asn-92. LRR repeat units lie at residues 98–122, 124–146, 147–170, 171–196, 197–223, 225–245, 246–268, 269–292, 294–318, and 320–344; these read FHQLRHLYLSYNNFTPSSIPSEFGM, NKLEVLFMSTGGFLGQVPSSFSN, LSMLSALLLHHNELTGSLSFVRNL, RKLTILDVSHNHFSGTLNPNSSLFEL, HNLAYLDLGSNNFTSSSLPYEFGNLNK, ELLDVSSNSFFGQVPPTISNL, TQLTELYLPLNDFTGSLPLVQNL, TKLSILHLSDNHFSGTIPSSLFTM, FLSYLDLGGNNLSGSIEVPNSSLSS, and LENLNLGENHFEGKIIEPISKLINL. An N-linked (GlcNAc...) asparagine glycan is attached at Asn-146. Residues Asn-190, Asn-208, Asn-244, and Asn-267 are each glycosylated (N-linked (GlcNAc...) asparagine). N-linked (GlcNAc...) asparagine glycosylation is found at Asn-304 and Asn-313. One copy of the LRR 11; degenerate repeat lies at 345-365; the sequence is KELHLSFLNTSYPINLKLFSS. A glycan (N-linked (GlcNAc...) asparagine) is linked at Asn-353. 5 LRR repeats span residues 366–391, 392–413, 414–438, 440–463, and 464–487; these read LKYLLLLDLSGGWISQASLSLDSYIP, STLEALLLKHCNISVFPNILKT, LPNLEFIALSTNKISGKIPEWLWSL, RLSSVFIEENLFTGFEGSSEILVN, and SSVRILNLLSNNLEGALPHLPLSV. N-linked (GlcNAc...) asparagine glycosylation is present at Asn-403. Asn-463 is a glycosylation site (N-linked (GlcNAc...) asparagine). The stretch at 488–507 is one LRR 17; degenerate repeat; that stretch reads NYFSARNNRYGGDIPLSICS. LRR repeat units follow at residues 508–529, 530–553, 554–577, 579–601, 602–625, 628–652, 702–725, 726–749, 750–773, and 775–798; these read RRSLVFLDLSYNNFTGPIPPCP, SNFLILNLRKNNLEGSIPDTYYAD, APLRSLDVGYNRLTGKLPRSLLNC, ALQFLSVDHNGIKDTFPFSLKAL, PKLQVLILHSNNFYGPLSPPNQGS, FPELRILEIAGNKFTGSLPPDFFEN, SSSATIDFSGNRLEGEIPESIGLL, KALIALNLSNNAFTGHIPLSLANL, KKIESLDLSSNQLSGTIPNGIGTL, and FLAYMNVSHNQLNGEIPQGTQITG. Asn-520 carries an N-linked (GlcNAc...) asparagine glycan. Asn-576 carries an N-linked (GlcNAc...) asparagine glycan. A glycan (N-linked (GlcNAc...) asparagine) is linked at Asn-732. An N-linked (GlcNAc...) asparagine glycan is attached at Asn-780. The chain crosses the membrane as a helical span at residues 848-868; that stretch reads GVGIGYGVGVLLGLAIAQLIA. The Cytoplasmic portion of the chain corresponds to 869–884; sequence SYKPEWLVFLFQSRNH.

Belongs to the RLP family.

It is found in the cell membrane. This Arabidopsis thaliana (Mouse-ear cress) protein is Receptor-like protein 39.